Here is a 257-residue protein sequence, read N- to C-terminus: tRNA pseudouridine synthase A (257 aa).

Asp57 acts as the Nucleophile in catalysis. Tyr115 is a binding site for substrate.

It belongs to the tRNA pseudouridine synthase TruA family. In terms of assembly, homodimer.

The enzyme catalyses uridine(38/39/40) in tRNA = pseudouridine(38/39/40) in tRNA. Functionally, formation of pseudouridine at positions 38, 39 and 40 in the anticodon stem and loop of transfer RNAs. The protein is tRNA pseudouridine synthase A of Lawsonia intracellularis (strain PHE/MN1-00).